The sequence spans 591 residues: L-gulonolactone oxidase 2 (591 aa).

Positions 1–27 (MAFTFPPSYRTLVGLYYIFTLMHTAVS) are cleaved as a signal peptide. Residues 56–238 (STCRAANVAY…SQVTFELQPM (183 aa)) enclose the FAD-binding PCMH-type domain.

The protein belongs to the oxygen-dependent FAD-linked oxidoreductase family. The cofactor is FAD.

It carries out the reaction L-gulono-1,4-lactone + O2 = L-ascorbate + H2O2 + H(+). The protein operates within cofactor biosynthesis; L-ascorbate biosynthesis. In terms of biological role, catalyzes the oxidation of L-gulono-1,4-lactone to ascorbic acid. L-gulono-1,4-lactone is oxidized to hydrogen peroxide and L-xylo-hexulonolactone which spontaneously isomerizes to L-ascorbate. In Arabidopsis thaliana (Mouse-ear cress), this protein is L-gulonolactone oxidase 2.